The chain runs to 249 residues: Secreted flagellin C (249 aa).

As to quaternary structure, interacts with FliS.

It localises to the secreted. In terms of biological role, might play a role in virulence. The protein is Secreted flagellin C (flaC) of Campylobacter jejuni subsp. jejuni serotype O:6 (strain 81116 / NCTC 11828).